The primary structure comprises 211 residues: Thymidylate kinase (211 aa).

ATP is bound at residue 10–17; sequence GGDGVGKS.

Belongs to the thymidylate kinase family.

It catalyses the reaction dTMP + ATP = dTDP + ADP. Its function is as follows. Phosphorylation of dTMP to form dTDP in both de novo and salvage pathways of dTTP synthesis. The chain is Thymidylate kinase from Clavibacter sepedonicus (Clavibacter michiganensis subsp. sepedonicus).